Consider the following 334-residue polypeptide: Malate dehydrogenase, cytoplasmic (334 aa).

Position 11–17 (11–17 (GAAGQIA)) interacts with NAD(+). Substrate contacts are provided by R92 and R98. NAD(+) contacts are provided by residues N105, Q112, and 129–131 (VGN). The substrate site is built by N131 and R162. Residue H187 is the Proton acceptor of the active site.

Belongs to the LDH/MDH superfamily. MDH type 2 family. In terms of assembly, homodimer.

The protein resides in the cytoplasm. It localises to the cytosol. It catalyses the reaction (S)-malate + NAD(+) = oxaloacetate + NADH + H(+). It carries out the reaction (S)-2-hydroxyglutarate + NAD(+) = 2-oxoglutarate + NADH + H(+). In terms of biological role, catalyzes the reduction of aromatic alpha-keto acids in the presence of NADH. Plays essential roles in the malate-aspartate shuttle and the tricarboxylic acid cycle, important in mitochondrial NADH supply for oxidative phosphorylation. Catalyzes the reduction of 2-oxoglutarate to 2-hydroxyglutarate, leading to elevated reactive oxygen species (ROS). This is Malate dehydrogenase, cytoplasmic (MDH1) from Gallus gallus (Chicken).